A 326-amino-acid chain; its full sequence is Serpentine receptor class gamma-14 (326 aa).

The next 7 helical transmembrane spans lie at 36-56 (QIIY…TILW), 67-83 (FFTL…SILI), 115-135 (IIML…VLLV), 156-176 (LKYV…NIAI), 204-224 (FQLV…AITL), 243-263 (VIIS…SFFF), and 274-294 (GFSF…MICV).

This sequence belongs to the nematode receptor-like protein srg family.

It is found in the membrane. The sequence is that of Serpentine receptor class gamma-14 (srg-14) from Caenorhabditis elegans.